Here is a 228-residue protein sequence, read N- to C-terminus: Octanoyltransferase (228 aa).

The region spanning 37-217 (AGGPDTLLLL…AVCDALDGRL (181 aa)) is the BPL/LPL catalytic domain. Substrate contacts are provided by residues 75–82 (RGGKITWH), 147–149 (AIG), and 160–162 (GFA). The active-site Acyl-thioester intermediate is the Cys-178.

Belongs to the LipB family.

The protein localises to the cytoplasm. The enzyme catalyses octanoyl-[ACP] + L-lysyl-[protein] = N(6)-octanoyl-L-lysyl-[protein] + holo-[ACP] + H(+). It functions in the pathway protein modification; protein lipoylation via endogenous pathway; protein N(6)-(lipoyl)lysine from octanoyl-[acyl-carrier-protein]: step 1/2. In terms of biological role, catalyzes the transfer of endogenously produced octanoic acid from octanoyl-acyl-carrier-protein onto the lipoyl domains of lipoate-dependent enzymes. Lipoyl-ACP can also act as a substrate although octanoyl-ACP is likely to be the physiological substrate. The chain is Octanoyltransferase from Mycolicibacterium smegmatis (strain ATCC 700084 / mc(2)155) (Mycobacterium smegmatis).